Consider the following 150-residue polypeptide: Urease accessory protein UreE (150 aa).

It belongs to the UreE family.

The protein localises to the cytoplasm. Involved in urease metallocenter assembly. Binds nickel. Probably functions as a nickel donor during metallocenter assembly. In Staphylococcus carnosus (strain TM300), this protein is Urease accessory protein UreE.